Consider the following 220-residue polypeptide: Small ribosomal subunit protein uS3c (220 aa).

In terms of domain architecture, KH type-2 spans 39-120 (IRDFIKNYVK…KLIIDIIRIT (82 aa)).

The protein belongs to the universal ribosomal protein uS3 family. Part of the 30S ribosomal subunit.

The protein localises to the plastid. The chain is Small ribosomal subunit protein uS3c (rps3) from Epifagus virginiana (Beechdrops).